The sequence spans 132 residues: Small ribosomal subunit protein uS8 (132 aa).

Belongs to the universal ribosomal protein uS8 family. In terms of assembly, part of the 30S ribosomal subunit. Contacts proteins S5 and S12.

Its function is as follows. One of the primary rRNA binding proteins, it binds directly to 16S rRNA central domain where it helps coordinate assembly of the platform of the 30S subunit. The polypeptide is Small ribosomal subunit protein uS8 (Rhodopseudomonas palustris (strain BisA53)).